Reading from the N-terminus, the 462-residue chain is MAVSLWQQCIGRLQDELSAQQFSMWIRPLQAEMDGDTLVLYAPNRFVLDWVRDKYINIINQFFTEQMGSNAPKLRFDIGSRPSARTVQPAPAAPRPTTGHTQTKARVGTAFNIQAEPMANANHRSNINPTYQFDNFVEGKSNQLGKAAAMQVAENPGGAYNPLFLYGGTGLGKTHLLHAVGNGIIKNNPNAKVVYMHSERFVQDMVKALQNNAIEEFKRYYRSVDALFIDDIQFFANKDRSQEEFFHTFNALLEGNHQIILTSDRYPKEIDGVEDRLKSRFGWGLTVAIEPPELETRVAILMRKAQESGINLPDEVAFFVAKRLRSNVRELEGALNRVIANANFTGRPITIDFVREALRDLLALQEKLVTIDNIQKTVAEYYKIKMADMLSKRRSRSVARPRQVAMALSKELTNQSLPEIGDAFGGRDHTTVLHACRKIAQLREESHDIKEDYANLIRTLSS.

The domain I, interacts with DnaA modulators stretch occupies residues 1–84; that stretch reads MAVSLWQQCI…RFDIGSRPSA (84 aa). The domain II stretch occupies residues 84–125; it reads ARTVQPAPAAPRPTTGHTQTKARVGTAFNIQAEPMANANHRS. Positions 126–342 are domain III, AAA+ region; it reads NINPTYQFDN…GALNRVIANA (217 aa). Residues glycine 170, glycine 172, lysine 173, and threonine 174 each contribute to the ATP site. Residues 343–462 form a domain IV, binds dsDNA region; that stretch reads NFTGRPITID…YANLIRTLSS (120 aa).

The protein belongs to the DnaA family. In terms of assembly, oligomerizes as a right-handed, spiral filament on DNA at oriC.

It is found in the cytoplasm. Its function is as follows. Plays an essential role in the initiation and regulation of chromosomal replication. ATP-DnaA binds to the origin of replication (oriC) to initiate formation of the DNA replication initiation complex once per cell cycle. Binds the DnaA box (a 9 base pair repeat at the origin) and separates the double-stranded (ds)DNA. Forms a right-handed helical filament on oriC DNA; dsDNA binds to the exterior of the filament while single-stranded (ss)DNA is stabiized in the filament's interior. The ATP-DnaA-oriC complex binds and stabilizes one strand of the AT-rich DNA unwinding element (DUE), permitting loading of DNA polymerase. After initiation quickly degrades to an ADP-DnaA complex that is not apt for DNA replication. Binds acidic phospholipids. The sequence is that of Chromosomal replication initiator protein DnaA from Shewanella denitrificans (strain OS217 / ATCC BAA-1090 / DSM 15013).